Here is a 568-residue protein sequence, read N- to C-terminus: U6 small nuclear RNA (adenine-(43)-N(6))-methyltransferase (568 aa).

The interval 1–20 is disordered; it reads MSEIDTNDIKKEMDNKNYRD. Positions 7-20 are enriched in basic and acidic residues; it reads NDIKKEMDNKNYRD. Residues Arg117, Gly151, Asp175, and Asn250 each contribute to the S-adenosyl-L-methionine site. Disordered stretches follow at residues 363–383, 403–431, and 503–538; these read KENN…INNN, NLDS…NNNN, and DPKI…NKNN. 3 stretches are compositionally biased toward low complexity: residues 365 to 383, 409 to 431, and 507 to 538; these read NNNI…INNN, NNNN…NNNN, and NNNN…NKNN.

It belongs to the methyltransferase superfamily. METTL16/RlmF family.

It carries out the reaction adenosine in U6 snRNA + S-adenosyl-L-methionine = N(6)-methyladenosine in U6 snRNA + S-adenosyl-L-homocysteine + H(+). Functionally, RNA N6-methyltransferase that mediates N6-methylation of adenine of U6 small nuclear RNA (U6 snRNA). The sequence is that of U6 small nuclear RNA (adenine-(43)-N(6))-methyltransferase from Dictyostelium discoideum (Social amoeba).